Reading from the N-terminus, the 2616-residue chain is Serine protease ndl (2616 aa).

An N-terminal signal peptide occupies residues 1–43; it reads MNYNMDEMEATRLLRHPRRWWSIGFGKRIVAISILVIIVLLFS. A phosphoserine mark is found at Ser215 and Ser220. A WIID 1 repeat occupies 261–269; that stretch reads ISWIIDGHD. Asn291 carries N-linked (GlcNAc...) asparagine glycosylation. Residues 320 to 328 form a WIID 2 repeat; sequence ISWILDHFD. Asn347 is a glycosylation site (N-linked (GlcNAc...) asparagine). The segment at 352–375 is disordered; sequence SASSEPIVDTENTNSDHVPTTENG. N-linked (GlcNAc...) asparagine glycosylation occurs at Asn379. The stretch at 399-407 is one WIID 3 repeat; it reads FDWILDGEE. N-linked (GlcNAc...) asparagine glycosylation is present at Asn417. WIID repeat units follow at residues 446-454 and 477-485; these read FDWIIDGRE and FDWIIDGEE. Residues Asn492 and Asn515 are each glycosylated (N-linked (GlcNAc...) asparagine). Residues 528-536 form a WIID 6 repeat; the sequence is FDWIIDGGE. The span at 537 to 547 shows a compositional bias: low complexity; it reads SSGEVSTSSTS. The tract at residues 537 to 574 is disordered; the sequence is SSGEVSTSSTSQPKLTTREAISNPESPRSSHPLDNPTS. The span at 548–565 shows a compositional bias: polar residues; sequence QPKLTTREAISNPESPRS. Phosphoserine is present on residues Ser574 and Ser581. N-linked (GlcNAc...) asparagine glycosylation occurs at Asn598. O-linked (Xyl...) (glycosaminoglycan) serine glycosylation occurs at Ser794. Positions 798–817 are disordered; it reads GQGANIFSKNASPQKPTNGQ. Residues 804–817 are compositionally biased toward polar residues; sequence FSKNASPQKPTNGQ. N-linked (GlcNAc...) asparagine glycosylation is present at Asn827. Ser829 is a glycosylation site (O-linked (Xyl...) (glycosaminoglycan) serine). The N-linked (GlcNAc...) asparagine glycan is linked to Asn861. LDL-receptor class A domains are found at residues 889 to 929 and 955 to 1006; these read SRCP…ACTC and FGCE…QCSM. Intrachain disulfides connect Cys891–Cys905, Cys899–Cys918, and Cys912–Cys927. The LDL-receptor class A 2; truncated domain maps to 929–956; the sequence is CADRVDEERLCDGYEDCPMGEDELGCFG. Cystine bridges form between Cys957–Cys982, Cys964–Cys995, and Cys989–Cys1004. Residue Asn975 is glycosylated (N-linked (GlcNAc...) asparagine). The Cell attachment site motif lies at 1031-1033; that stretch reads RGD. Residue Asn1064 is glycosylated (N-linked (GlcNAc...) asparagine). 2 positions are modified to phosphoserine: Ser1134 and Ser1136. The region spanning 1145 to 1383 is the Peptidase S1 1 domain; that stretch reads IVGGSYTSAL…YLDWLEMATT (239 aa). An intrachain disulfide couples Cys1170 to Cys1186. Active-site charge relay system residues include His1185 and Asp1233. 6 disulfide bridges follow: Cys1276–Cys1338, Cys1305–Cys1317, Cys1328–Cys1359, Cys1396–Cys1408, Cys1401–Cys1421, and Cys1415–Cys1430. Residue Ser1332 is the Charge relay system of the active site. The 39-residue stretch at 1394–1432 folds into the LDL-receptor class A 4 domain; that stretch reads QLCPGFICVWGGKRCIAKRQRCDRNVDCLGGEDEVGCTY. A glycan (N-linked (GlcNAc...) asparagine) is linked at Asn1445. Disordered regions lie at residues 1530–1557 and 1683–1704; these read FTVS…PSTN and PTTT…HSEK. Low complexity-rich tracts occupy residues 1537-1557 and 1683-1700; these read TSPS…PSTN and PTTT…SSST. The region spanning 1713-1743 is the LDL-receptor class A 5; truncated domain; that stretch reads FVCKKMSQIVDIMMRCDRKVDCEDGTDELDC. 6 disulfide bridges follow: Cys1728–Cys1745, Cys1734–Cys1764, Cys1758–Cys1773, Cys1776–Cys1789, Cys1783–Cys1802, and Cys1796–Cys1811. Positions 1745–1775 constitute an LDL-receptor class A 6; truncated domain; the sequence is CKDYLKGSLKGLICDGKADCEDLTDEQNCVE. The 40-residue stretch at 1774 to 1813 folds into the LDL-receptor class A 7 domain; the sequence is VECQSNEFRCPLSKTCLPLSSRCDNKVDCKFKEDEKDCFA. Residues Asn1878, Asn1956, and Asn2023 are each glycosylated (N-linked (GlcNAc...) asparagine). The Peptidase S1 2 domain maps to 2027–2301; the sequence is LVNEQLHEAI…LQDIIDKPSC (275 aa). Cysteines 2055 and 2071 form a disulfide. N-linked (GlcNAc...) asparagine glycans are attached at residues Asn2144, Asn2173, Asn2197, Asn2237, and Asn2269. Residues Cys2177 and Cys2230 are joined by a disulfide bond. LDL-receptor class A domains follow at residues 2308–2346, 2349–2389, and 2419–2459; these read PDCS…KCRQ, QQCA…ICSC, and CNCT…YCFG. Disulfide bonds link Cys2310–Cys2320, Cys2315–Cys2333, Cys2327–Cys2344, Cys2351–Cys2364, Cys2358–Cys2377, and Cys2371–Cys2387. Residues 2387–2419 form the LDL-receptor class A 10; truncated domain; that stretch reads CSCFTYLQATDPSKICDGKRNCWDKSDESSVLC. Asn2420 is a glycosylation site (N-linked (GlcNAc...) asparagine). Cystine bridges form between Cys2421–Cys2435, Cys2428–Cys2448, and Cys2442–Cys2457. 2 N-linked (GlcNAc...) asparagine glycosylation sites follow: Asn2556 and Asn2601.

This sequence belongs to the peptidase S1 family. Post-translationally, requires cleavage for activation (presumably). As to expression, follicle.

The protein localises to the secreted. It is found in the extracellular space. Its subcellular location is the extracellular matrix. Functionally, component of the extracellular signaling pathway that establishes the dorsal-ventral pathway of the embryo. A protease cascade involving ndl, gd, snk and ea results in activation of the spz Toll receptor ligand; acts upstream of gd, snk and ea and is required for proteolytic processing of gd. Activation of ea requires activation of the ndl-gd-snk protease cascade and sulfation of a vitelline membrane component by pip. Localized activation of the Toll receptor in the ventral region of the embryo defines cell identities along the dorsal-ventral continuum. This chain is Serine protease ndl, found in Drosophila melanogaster (Fruit fly).